The sequence spans 443 residues: Putative rhamnogalacturonase D (443 aa).

A signal peptide spans 1–16; the sequence is MLVTSLIALLPAIAAA. Cys-37 and Cys-63 form a disulfide bridge. N-linked (GlcNAc...) asparagine glycans are attached at residues Asn-47, Asn-103, Asn-124, and Asn-152. Catalysis depends on Asp-215, which acts as the Proton donor. A disulfide bond links Cys-217 and Cys-234. 5 N-linked (GlcNAc...) asparagine glycosylation sites follow: Asn-235, Asn-250, Asn-263, Asn-276, and Asn-281. A disulfide bridge links Cys-338 with Cys-344. Asn-346 carries N-linked (GlcNAc...) asparagine glycosylation. Cysteines 366 and 375 form a disulfide. The N-linked (GlcNAc...) asparagine glycan is linked to Asn-380.

It belongs to the glycosyl hydrolase 28 family.

The protein localises to the secreted. Functionally, pectinolytic enzymes consist of four classes of enzymes: pectine lyase, polygalacturonase, pectin methylesterase and rhamnogalacturonase. Hydrolyzes alpha-D-galacturonopyranosyl-(1,2)-alpha-L-rhamnopyranosyl linkages in the backbone of the hairy regions of pectins. This chain is Putative rhamnogalacturonase D (rhgD), found in Aspergillus niger (strain ATCC MYA-4892 / CBS 513.88 / FGSC A1513).